The primary structure comprises 747 residues: ESX-1 secretion system protein EccCa1 (747 aa).

Transmembrane regions (helical) follow at residues 41-61 (ILPYVMGGAMLGMIAIMVAGG), 65-85 (LSPYMLMMPLMMIVMMVGGLA), and 222-242 (FPTIAIGGDLAGAAGLMTAMI). Residues 456-665 (GNVMYLDIKE…LRTTSSHESK (210 aa)) form the FtsK domain. 479 to 486 (GTTGSGKS) lines the ATP pocket.

Part of the ESX-1 / type VII secretion system (T7SS), which is composed of cytosolic and membrane components. The ESX-1 membrane complex is composed of EccB1, EccCa1, EccCb1, EccD1 and EccE1.

Its subcellular location is the cell inner membrane. Its function is as follows. Part of the ESX-1 specialized secretion system, which delivers several virulence factors to host cells during infection, including the key virulence factors EsxA (ESAT-6) and EsxB (CFP-10). This chain is ESX-1 secretion system protein EccCa1, found in Mycobacterium tuberculosis (strain CDC 1551 / Oshkosh).